A 675-amino-acid chain; its full sequence is Anosmin-1 (675 aa).

A signal peptide spans M1–G21. Cystine bridges form between C43–C77, C47–C71, C80–C99, C84–C95, and C110–C114. N-linked (GlcNAc...) asparagine glycosylation is present at N65. Residues L121–K170 enclose the WAP domain. Fibronectin type-III domains follow at residues P180–P281, A286–D392, R418–T515, and K545–P652. Residues N203 and N294 are each glycosylated (N-linked (GlcNAc...) asparagine). The span at S388–A402 shows a compositional bias: polar residues. Positions S388–Y413 are disordered. N465, N548, and N559 each carry an N-linked (GlcNAc...) asparagine glycan. The interval L654 to Y675 is disordered. Basic residues predominate over residues H656–K669.

As to expression, mainly expressed in neurons of the central nervous system during the second half of embryonic life. Expressed in mitral neurons of the olfactory bulbs, striatal neurons, Purkinje cells of the cerebellum, retinal neurons and neurons of the brainstem and spinal cord.

The protein localises to the cell surface. Its function is as follows. May be an adhesion-like molecule with anti-protease activity. This is Anosmin-1 from Gallus gallus (Chicken).